A 612-amino-acid polypeptide reads, in one-letter code: BTB/POZ domain-containing protein 9 (612 aa).

A BTB domain is found at 36–104; the sequence is GDVTFVVEKK…IYTGRATLTD (69 aa). Residues 142 to 240 form the BACK domain; it reads VCMTFDVASL…SLTELLNVVR (99 aa). The interval 560 to 612 is disordered; that stretch reads QSSQKEENSEESGTGDTSLAGQQLDSHALRAPSGSSLPSSPGSNSRSPNRQHQ. The segment covering 573–584 has biased composition (polar residues); it reads TGDTSLAGQQLD. A compositionally biased stretch (low complexity) spans 588 to 612; that stretch reads LRAPSGSSLPSSPGSNSRSPNRQHQ.

Detected in the brain (at protein level). Moderately expressed in all specific brain regions examined. Expressed in the dopaminergic neurons of the substantia nigra and A11 neurons. Highly expressed in kidney and moderately expressed in all other adult and fetal tissues.

In Homo sapiens (Human), this protein is BTB/POZ domain-containing protein 9 (BTBD9).